A 378-amino-acid chain; its full sequence is Peptide methionine sulfoxide reductase MsrA/MsrB (378 aa).

The segment at 40 to 197 (QQATLAGGCF…KVRYNYYRYA (158 aa)) is peptide methionine sulfoxide reductase A. The active site involves cysteine 48. A MsrB domain is found at 240 to 362 (DEQIRAKLTS…NSAAMRFIPK (123 aa)). Cysteine 351 (nucleophile) is an active-site residue.

The protein in the N-terminal section; belongs to the MsrA Met sulfoxide reductase family. This sequence in the C-terminal section; belongs to the MsrB Met sulfoxide reductase family.

It carries out the reaction L-methionyl-[protein] + [thioredoxin]-disulfide + H2O = L-methionyl-(S)-S-oxide-[protein] + [thioredoxin]-dithiol. It catalyses the reaction [thioredoxin]-disulfide + L-methionine + H2O = L-methionine (S)-S-oxide + [thioredoxin]-dithiol. The catalysed reaction is L-methionyl-[protein] + [thioredoxin]-disulfide + H2O = L-methionyl-(R)-S-oxide-[protein] + [thioredoxin]-dithiol. Has an important function as a repair enzyme for proteins that have been inactivated by oxidation. Catalyzes the reversible oxidation-reduction of methionine sulfoxide in proteins to methionine. This Vibrio cholerae serotype O1 (strain ATCC 39315 / El Tor Inaba N16961) protein is Peptide methionine sulfoxide reductase MsrA/MsrB (msrAB).